Consider the following 501-residue polypeptide: UDP-N-acetylmuramoyl-L-alanyl-D-glutamate--2,6-diaminopimelate ligase (501 aa).

UDP-N-acetyl-alpha-D-muramoyl-L-alanyl-D-glutamate-binding positions include Leu-26, Ser-28, and 43–45 (HQC). Residue 123–129 (GTNGKTT) participates in ATP binding. Residues Asn-164, 165–166 (TT), Ser-192, Gln-198, and Arg-200 contribute to the UDP-N-acetyl-alpha-D-muramoyl-L-alanyl-D-glutamate site. Lys-232 is subject to N6-carboxylysine. Residues Arg-398, 422-425 (DNPR), Gly-473, and Glu-477 each bind meso-2,6-diaminopimelate. The Meso-diaminopimelate recognition motif signature appears at 422–425 (DNPR).

Belongs to the MurCDEF family. MurE subfamily. Mg(2+) serves as cofactor. In terms of processing, carboxylation is probably crucial for Mg(2+) binding and, consequently, for the gamma-phosphate positioning of ATP.

The protein resides in the cytoplasm. The catalysed reaction is UDP-N-acetyl-alpha-D-muramoyl-L-alanyl-D-glutamate + meso-2,6-diaminopimelate + ATP = UDP-N-acetyl-alpha-D-muramoyl-L-alanyl-gamma-D-glutamyl-meso-2,6-diaminopimelate + ADP + phosphate + H(+). It participates in cell wall biogenesis; peptidoglycan biosynthesis. Functionally, catalyzes the addition of meso-diaminopimelic acid to the nucleotide precursor UDP-N-acetylmuramoyl-L-alanyl-D-glutamate (UMAG) in the biosynthesis of bacterial cell-wall peptidoglycan. This chain is UDP-N-acetylmuramoyl-L-alanyl-D-glutamate--2,6-diaminopimelate ligase, found in Haemophilus ducreyi (strain 35000HP / ATCC 700724).